Here is a 155-residue protein sequence, read N- to C-terminus: Ribonuclease H (155 aa).

The RNase H type-1 domain maps to 1 to 143 (MNQVEIYTDG…ADALANRGVD (143 aa)). The Mg(2+) site is built by D9, E47, D69, and D135.

The protein belongs to the RNase H family. Monomer. Mg(2+) serves as cofactor.

The protein resides in the cytoplasm. It carries out the reaction Endonucleolytic cleavage to 5'-phosphomonoester.. Functionally, endonuclease that specifically degrades the RNA of RNA-DNA hybrids. This Verminephrobacter eiseniae (strain EF01-2) protein is Ribonuclease H.